The chain runs to 91 residues: uncharacterized protein (91 aa).

Its subcellular location is the plastid. It localises to the cyanelle. This is an uncharacterized protein from Cyanophora paradoxa.